The primary structure comprises 280 residues: MSALNLTVRVHPVVLFQVVDAFERRNADSHRVIGTLLGSVDKGVVEVTNCFCVPHKEHDDQVEAELSYALDMYDLNRKVNSNESVVGWWATGNDVTNHSSVIHEYYARECNNPVHLTVDTSLQGGRMGLRAYVCIQLGVPGGKSGCMFTPIPVELTSYEPETFGLKLLQKTVGVSPAHRPKTVPPMLDLAQISEASTKLQSLLDLILKYVDDVIAHKVTPDNAVGRQLLDLIHSVPHMTHEQFTQMFNANVRNLLLVITLSQLIKTQLQLNEKLTFLPTA.

The region spanning 8–138 (VRVHPVVLFQ…LRAYVCIQLG (131 aa)) is the MPN domain.

Belongs to the eIF-3 subunit F family. As to quaternary structure, component of the eukaryotic translation initiation factor 3 (eIF-3) complex. The eIF-3 complex interacts with pix.

Its subcellular location is the cytoplasm. In terms of biological role, component of the eukaryotic translation initiation factor 3 (eIF-3) complex, which is involved in protein synthesis of a specialized repertoire of mRNAs and, together with other initiation factors, stimulates binding of mRNA and methionyl-tRNAi to the 40S ribosome. The eIF-3 complex specifically targets and initiates translation of a subset of mRNAs involved in cell proliferation. This Drosophila erecta (Fruit fly) protein is Eukaryotic translation initiation factor 3 subunit F-1.